The sequence spans 226 residues: 2-C-methyl-D-erythritol 4-phosphate cytidylyltransferase (226 aa).

The protein belongs to the IspD/TarI cytidylyltransferase family. IspD subfamily.

The catalysed reaction is 2-C-methyl-D-erythritol 4-phosphate + CTP + H(+) = 4-CDP-2-C-methyl-D-erythritol + diphosphate. It functions in the pathway isoprenoid biosynthesis; isopentenyl diphosphate biosynthesis via DXP pathway; isopentenyl diphosphate from 1-deoxy-D-xylulose 5-phosphate: step 2/6. Functionally, catalyzes the formation of 4-diphosphocytidyl-2-C-methyl-D-erythritol from CTP and 2-C-methyl-D-erythritol 4-phosphate (MEP). This chain is 2-C-methyl-D-erythritol 4-phosphate cytidylyltransferase, found in Bacillus cytotoxicus (strain DSM 22905 / CIP 110041 / 391-98 / NVH 391-98).